We begin with the raw amino-acid sequence, 482 residues long: Hydrogenase transcriptional regulatory protein HoxA (482 aa).

In terms of domain architecture, Response regulatory spans T7–V121. D55 carries the 4-aspartylphosphate modification. The Sigma-54 factor interaction domain occupies A167–A394. Residues G193–E200 and E265–Q274 contribute to the ATP site. Positions K456–L475 form a DNA-binding region, H-T-H motif.

It is found in the cytoplasm. Its function is as follows. Probable member of the two-component regulatory system involved in the regulation of the hydrogenase activity. HoxA is probably phosphorylated by a sensory component (which could be HoxX) and then acts in conjunction with sigma-54 as a transcriptional activator. The polypeptide is Hydrogenase transcriptional regulatory protein HoxA (hoxA) (Cupriavidus necator (strain ATCC 17699 / DSM 428 / KCTC 22496 / NCIMB 10442 / H16 / Stanier 337) (Ralstonia eutropha)).